The following is a 170-amino-acid chain: SKP1-like protein 16 (170 aa).

The interval 109-167 (ILAVNYLNVQDLLGLTCQTVADHMKDMSPEEVRELFNIENDYTPEEEDAIRKENAWAFE) is interaction with the F-box domain of F-box proteins.

This sequence belongs to the SKP1 family. In terms of assembly, part of a SCF (SKP1-cullin-F-box) protein ligase complex. Interacts with CPR1/CPR30, At3g61590 and At4g11590. As to expression, mainly detected in the siliques.

The protein resides in the nucleus. It participates in protein modification; protein ubiquitination. Its function is as follows. Involved in ubiquitination and subsequent proteasomal degradation of target proteins. Together with CUL1, RBX1 and a F-box protein, it forms a SCF E3 ubiquitin ligase complex. The functional specificity of this complex depends on the type of F-box protein. In the SCF complex, it serves as an adapter that links the F-box protein to CUL1. In Arabidopsis thaliana (Mouse-ear cress), this protein is SKP1-like protein 16 (ASK16).